The chain runs to 106 residues: UPF0473 protein LCABL_08490 (106 aa).

The protein belongs to the UPF0473 family.

This chain is UPF0473 protein LCABL_08490, found in Lacticaseibacillus casei (strain BL23) (Lactobacillus casei).